Reading from the N-terminus, the 1194-residue chain is MRHSLECIQANQIFPRKQLIREDENLQVPFLELHGESTEYVGRAEDAIIALSNYRLHIKFKESLVNVPLQLIESVECRDIFQLHLTCKDCKVIRCQFPTFEQCQDWLKRLNNAIRPPGKIEDLFSFAYHAWCMEVYASEKEQHGDLCRPGEHVTSRFKNEVERMGFDMNNAWRISNINEKYKLCGSYPQELIVPAWITDKELESVAGFRSWKRIPAVIYRHQSNGAVIARCGQPEVSWWGWRNADDEHLVQSVAKACASDSQSSVGKVSTRNSCRGFPNAGDLSDVEFDASLSNASGTESLALQPQKLLILDARSYAAAVANRAKGGGCECPEYYPNCEVVFMGMANIHSIRRSFQSLRLLCTQMPDPGNWLSALESTKWLHHLSVLLKSALLVVHAVDRDQRPVLVHCSDGWDRTPQIVALAKLLLDPYYRTVEGFQVLVEMEWLDFGHKFADRCGHGENSDDLNERCPVFLQWLDCVHQLQRQFPCSFEFNEAFLVKLVQHTYSCLFGTFLCNNAKERGEKQTQERTCSVWSLLRAGNKAFKNLLYSSQSEAVLYPVCHVRNLMLWSAVYLPCPSPSTPTDDSCAPYPAPGTSPDEPPLSRLPKTRSFDNLTTTCDNMVPLASRRSSDPSLNEKWQEHGRSLELSSFAGSGEEVPAIDSLRRPSRLLGGAELSVAAGVAEGQMENILQEATKEESGVEEPTHREHTEVPEVKEEAPLAKESRTAAQGSGVLYQEPQLDDATLRSHLGPSLSSFSQGIPEHREVGHSVLSSSLPASLRGEDSQEVPVEQPQVENIAEDRENVVPAVPVDVKIGLGTSESSPLLPSQVPFETRGPHMNNSVHMLLEDKVKSESGPQLHHRPCLASSGRFSGKDMLPIAPEPRSAERPQWDSVLHRTSSPGNTLSLMMQAPCALPLDKCRQRIVCNGALETENKASEQPAGFDTLQKYPTPNGHCANGETGRSKDSLSHQLSATSYSSAHSCSRNLHHKWLNSHSGRPSTTNSPEQPSRSHLDDDGMPVYTDTIQQRLRQIESGHQQEVETLKKQVQELKSRLESQYLTSSLRFNGDFGDEVTSIPDSESNLDQNCLSRCSTEIFSEASWEQVDKQDTEMTRWLPDHLAAHCYACDSAFWLASRKHHCRNCGNVFCSSCCNQKVPVPSQQLFEPSRVCKSCYSSLHPTSSSIDLELDKPIAATSN.

S4 bears the Phosphoserine mark. A Myotubularin phosphatase domain is found at 151–572 (EHVTSRFKNE…RNLMLWSAVY (422 aa)). A 1,2-diacyl-sn-glycero-3-phospho-(1D-myo-inositol-3,5-bisphosphate)-binding residues include N322, N347, and I348. A 1,2-diacyl-sn-glycero-3-phospho-(1D-myo-inositol-3-phosphate) contacts are provided by N322, N347, and I348. Catalysis depends on C409, which acts as the Phosphocysteine intermediate. 8 residues coordinate a 1,2-diacyl-sn-glycero-3-phospho-(1D-myo-inositol-3,5-bisphosphate): S410, D411, G412, W413, D414, R415, K451, and R455. 6 residues coordinate a 1,2-diacyl-sn-glycero-3-phospho-(1D-myo-inositol-3-phosphate): S410, D411, G412, W413, D414, and R415. R455 serves as a coordination point for a 1,2-diacyl-sn-glycero-3-phospho-(1D-myo-inositol-3-phosphate). The tract at residues 583 to 609 (DDSCAPYPAPGTSPDEPPLSRLPKTRS) is disordered. Residues 589-599 (YPAPGTSPDEP) show a composition bias toward pro residues. Residues S609, S629, S643, and S647 each carry the phosphoserine modification. The span at 693–724 (TKEESGVEEPTHREHTEVPEVKEEAPLAKESR) shows a compositional bias: basic and acidic residues. Disordered stretches follow at residues 693 to 731 (TKEESGVEEPTHREHTEVPEVKEEAPLAKESRTAAQGSG), 852 to 871 (ESGPQLHHRPCLASSGRFSG), and 876 to 897 (PIAPEPRSAERPQWDSVLHRTS). T725 bears the Phosphothreonine mark. S904 carries the post-translational modification Phosphoserine. Disordered stretches follow at residues 932-971 (NKASEQPAGFDTLQKYPTPNGHCANGETGRSKDSLSHQLS) and 988-1017 (KWLNSHSGRPSTTNSPEQPSRSHLDDDGMP). Polar residues predominate over residues 991–1006 (NSHSGRPSTTNSPEQP). Residues 1025-1058 (QRLRQIESGHQQEVETLKKQVQELKSRLESQYLT) adopt a coiled-coil conformation. Residue S1060 is modified to Phosphoserine. Residues 1115–1175 (DHLAAHCYAC…VCKSCYSSLH (61 aa)) form an FYVE-type zinc finger. The Zn(2+) site is built by C1121, C1124, C1137, C1140, C1145, C1148, C1167, and C1170.

It belongs to the protein-tyrosine phosphatase family. Non-receptor class myotubularin subfamily. In terms of assembly, forms heterodimers with MTMR4 that recruit both CEP55 and PLK1; occurs during early mitosis, regulates the phosphorylation of CEP55 by PLK1 and its recruitment to the midbody where it mediates cell abscission.

The protein resides in the cytoplasm. It is found in the cytosol. Its subcellular location is the membrane. The catalysed reaction is a 1,2-diacyl-sn-glycero-3-phospho-(1D-myo-inositol-3,5-bisphosphate) + H2O = a 1,2-diacyl-sn-glycero-3-phospho-(1D-myo-inositol-5-phosphate) + phosphate. The enzyme catalyses a 1,2-diacyl-sn-glycero-3-phospho-(1D-myo-inositol-3-phosphate) + H2O = a 1,2-diacyl-sn-glycero-3-phospho-(1D-myo-inositol) + phosphate. It carries out the reaction 1,2-dihexadecanoyl-sn-glycero-3-phospho-(1D-myo-inositol-3-phosphate) + H2O = 1,2-dihexadecanoyl-sn-glycero-3-phospho-(1D-myo-inositol) + phosphate. It catalyses the reaction 1,2-dioctanoyl-sn-glycero-3-phospho-(1-D-myo-inositol-3-phosphate) + H2O = 1,2-dioctanoyl-sn-glycero-3-phospho-(1D-myo-inositol) + phosphate. The catalysed reaction is 1,2-dihexadecanoyl-sn-glycero-3-phospho-(1D-myo-inositol-3,5-phosphate) + H2O = 1,2-dihexadecanoyl-sn-glycero-3-phospho-(1D-myo-inositol-5-phosphate) + phosphate. In terms of biological role, lipid phosphatase that specifically dephosphorylates the D-3 position of phosphatidylinositol 3-phosphate and phosphatidylinositol 3,5-bisphosphate, generating phosphatidylinositol and phosphatidylinositol 5-phosphate. Decreases the levels of phosphatidylinositol 3-phosphate, a phospholipid found in cell membranes where it acts as key regulator of both cell signaling and intracellular membrane traffic. Could also have a molecular sequestering/adapter activity and regulate biological processes independently of its phosphatase activity. It includes the regulation of midbody abscission during mitotic cytokinesis. This is Phosphatidylinositol-3,5-bisphosphate 3-phosphatase MTMR3 from Rattus norvegicus (Rat).